Here is a 103-residue protein sequence, read N- to C-terminus: Small ribosomal subunit protein uS10 (103 aa).

Belongs to the universal ribosomal protein uS10 family. In terms of assembly, part of the 30S ribosomal subunit.

Functionally, involved in the binding of tRNA to the ribosomes. The sequence is that of Small ribosomal subunit protein uS10 from Aromatoleum aromaticum (strain DSM 19018 / LMG 30748 / EbN1) (Azoarcus sp. (strain EbN1)).